The primary structure comprises 436 residues: Serine/threonine-protein kinase STK11 (436 aa).

Phosphoserine is present on serine 31. An N6-acetyllysine mark is found at lysine 44 and lysine 48. The tract at residues 45–90 (LIGKYLMGDLLGEGSYGKVKEVLDSETLCRRAVKILKKKKLRRIPN) is sufficient for interaction with SIRT1. The Protein kinase domain maps to 49–309 (YLMGDLLGEG…IRQIRQHSWF (261 aa)). ATP contacts are provided by residues 55–63 (LGEGSYGKV) and lysine 78. Residues lysine 96 and lysine 97 each carry the N6-acetyllysine modification. Catalysis depends on aspartate 176, which acts as the Proton acceptor. The residue at position 189 (threonine 189) is a Phosphothreonine; by autocatalysis. Lysine 296 and lysine 311 each carry N6-acetyllysine. A Phosphoserine modification is found at serine 325. At threonine 336 the chain carries Phosphothreonine; by autocatalysis. At threonine 366 the chain carries Phosphothreonine; by ATM and autocatalysis. The segment at 398–421 (TEPQLSSKVKPEGRPGTANPARKV) is disordered. The residue at position 403 (serine 403) is a Phosphoserine. Lysine 420 bears the N6-acetyllysine mark. Cysteine 422 carries the S-palmitoyl cysteine lipid modification. Lysine 426 carries the post-translational modification N6-acetyllysine. The residue at position 431 (serine 431) is a Phosphoserine; by autocatalysis, PKA, PKC/PRKCZ and RPS6KA1. Cysteine 433 is subject to Cysteine methyl ester. Cysteine 433 is lipidated: S-farnesyl cysteine. Lysine 434 is modified (N6-acetyllysine). A propeptide spans 434–436 (KQQ) (removed in mature form).

Belongs to the protein kinase superfamily. CAMK Ser/Thr protein kinase family. LKB1 subfamily. As to quaternary structure, catalytic component of a trimeric complex composed of STK11/LKB1, STRAD (STRADA or STRADB) and CAB39/MO25 (CAB39/MO25alpha or CAB39L/MO25beta): the complex tethers STK11/LKB1 in the cytoplasm and stimulates its catalytic activity. Found in a ternary complex composed of SMAD4, STK11/LKB1 and STK11IP. Interacts with p53/TP53, SMAD4, STK11IP and WDR6. Interacts with NR4A1. Interacts with NISCH; this interaction may increase STK11 activity. Interacts with PTEN, leading to PTEN phosphorylation. Interacts with SIRT1; the interaction deacetylates STK11. Interacts with CDKN1A. Mg(2+) serves as cofactor. Mn(2+) is required as a cofactor. Post-translationally, phosphorylated by ATM at Thr-366 following ionizing radiation (IR). Phosphorylation at Ser-431 by RPS6KA1 and/or some PKA is required to inhibit cell growth. Phosphorylation at Ser-431 is also required during neuronal polarization to mediate phosphorylation of BRSK1 and BRSK2. Phosphorylation by PKC/PRKCZ at Ser-399 in isoform 2 promotes metformin (or peroxynitrite)-induced nuclear export of STK11 and activation of AMPK. UV radiation-induced phosphorylation at Thr-366 mediates CDKN1A degradation. Acetylated. Deacetylation at Lys-48 enhances cytoplasmic localization and kinase activity in vitro. As to expression, widely expressed. In terms of tissue distribution, predominantly expressed in testis (at protein level). Expressed in adult brain and liver and absent from tissues derived from postnatal day 7.

The protein resides in the nucleus. Its subcellular location is the cytoplasm. The protein localises to the membrane. It localises to the mitochondrion. The catalysed reaction is L-seryl-[protein] + ATP = O-phospho-L-seryl-[protein] + ADP + H(+). The enzyme catalyses L-threonyl-[protein] + ATP = O-phospho-L-threonyl-[protein] + ADP + H(+). Activated by forming a complex with STRAD (STRADA or STRADB) and CAB39/MO25 (CAB39/MO25alpha or CAB39L/MO25beta): STRADA (or STRADB)-binding promotes a conformational change of STK11/LKB1 in an active conformation, which is stabilized by CAB39/MO25alpha (or CAB39L/MO25beta) interacting with the STK11/LKB1 activation loop. Sequestration in the nucleus by NR4A1 prevents it from phosphorylating and activating cytoplasmic AMPK. Tumor suppressor serine/threonine-protein kinase that controls the activity of AMP-activated protein kinase (AMPK) family members, thereby playing a role in various processes such as cell metabolism, cell polarity, apoptosis and DNA damage response. Acts by phosphorylating the T-loop of AMPK family proteins, thus promoting their activity: phosphorylates PRKAA1, PRKAA2, BRSK1, BRSK2, MARK1, MARK2, MARK3, MARK4, NUAK1, NUAK2, SIK1, SIK2, SIK3 and SNRK but not MELK. Also phosphorylates non-AMPK family proteins such as STRADA, PTEN and possibly p53/TP53. Acts as a key upstream regulator of AMPK by mediating phosphorylation and activation of AMPK catalytic subunits PRKAA1 and PRKAA2 and thereby regulates processes including: inhibition of signaling pathways that promote cell growth and proliferation when energy levels are low, glucose homeostasis in liver, activation of autophagy when cells undergo nutrient deprivation, and B-cell differentiation in the germinal center in response to DNA damage. Also acts as a regulator of cellular polarity by remodeling the actin cytoskeleton. Required for cortical neuron polarization by mediating phosphorylation and activation of BRSK1 and BRSK2, leading to axon initiation and specification. Involved in DNA damage response: interacts with p53/TP53 and recruited to the CDKN1A/WAF1 promoter to participate in transcription activation. Able to phosphorylate p53/TP53; the relevance of such result in vivo is however unclear and phosphorylation may be indirect and mediated by downstream STK11/LKB1 kinase NUAK1. Also acts as a mediator of p53/TP53-dependent apoptosis via interaction with p53/TP53: translocates to the mitochondrion during apoptosis and regulates p53/TP53-dependent apoptosis pathways. Regulates UV radiation-induced DNA damage response mediated by CDKN1A. In association with NUAK1, phosphorylates CDKN1A in response to UV radiation and contributes to its degradation which is necessary for optimal DNA repair. In terms of biological role, has a role in spermiogenesis. This Mus musculus (Mouse) protein is Serine/threonine-protein kinase STK11.